Reading from the N-terminus, the 101-residue chain is Small ribosomal subunit protein uS14 (101 aa).

The protein belongs to the universal ribosomal protein uS14 family. As to quaternary structure, part of the 30S ribosomal subunit. Contacts proteins S3 and S10.

Functionally, binds 16S rRNA, required for the assembly of 30S particles and may also be responsible for determining the conformation of the 16S rRNA at the A site. This chain is Small ribosomal subunit protein uS14, found in Buchnera aphidicola subsp. Schizaphis graminum (strain Sg).